Here is a 294-residue protein sequence, read N- to C-terminus: uncharacterized protein (294 aa).

The tract at residues 1-215 is disordered; the sequence is MTTAITPDKK…DQDDDDQKDL (215 aa). Composition is skewed to basic residues over residues 27–43 and 50–78; these read TKPR…KSKK and AKKR…KKAP. The span at 79–88 shows a compositional bias: low complexity; the sequence is MKAPSKPAAK. Residues 92-102 show a composition bias toward polar residues; that stretch reads QQAQASLQKPI. The span at 118–136 shows a compositional bias: pro residues; that stretch reads PRPPTPIPPTGVKPEPAPR. Low complexity predominate over residues 145-160; that stretch reads SVSSTTPRTSATTGTT.

This is an uncharacterized protein from Caenorhabditis elegans.